A 262-amino-acid polypeptide reads, in one-letter code: Rhomboid-type serine protease 2 (262 aa).

Residues 1–16 lie on the Cytoplasmic side of the membrane; the sequence is MNWKSYVFPGGHPPAA. A helical membrane pass occupies residues 17–37; sequence LTTGLVVFLTAIYLLSFIFAL. Topologically, residues 38–57 are lumenal; the sequence is REDLSLAPESLFKLQMSRLS. The chain crosses the membrane as a helical span at residues 58–78; that stretch reads LYPLIHLSLPHLLFNVLAIWA. At 79-89 the chain is on the cytoplasmic side; it reads PLNLFEETHGT. Residues 90 to 110 form a helical membrane-spanning segment; it reads VYTGVFLNLSALFAGILYCLL. Residues 111 to 112 are Lumenal-facing; the sequence is GK. Residues 113-133 traverse the membrane as a helical segment; sequence LLYPEALVAGASGWCFTLFAY. Catalysis depends on S124, which acts as the Nucleophile. At 134 to 151 the chain is on the cytoplasmic side; that stretch reads YSFKESQIRPRTRIFRTD. A helical transmembrane segment spans residues 152–168; it reads YSIPTLYTPLVLLVAIA. Topologically, residues 169-174 are lumenal; that stretch reads VVIPGS. A helical transmembrane segment spans residues 175–191; sequence SFWGHFFGLCVGYAIGY. H179 is a catalytic residue. The Cytoplasmic portion of the chain corresponds to 192 to 262; it reads KESWFNKITP…DNSGTVLGTA (71 aa). Residues 243–262 form a disordered region; it reads STETPLPLHNDNSGTVLGTA. A compositionally biased stretch (polar residues) spans 252–262; sequence NDNSGTVLGTA.

This sequence belongs to the peptidase S54 family. As to quaternary structure, interacts with SNX3.

It localises to the golgi apparatus membrane. The protein localises to the golgi apparatus. It is found in the cis-Golgi network membrane. The enzyme catalyses Cleaves type-1 transmembrane domains using a catalytic dyad composed of serine and histidine that are contributed by different transmembrane domains.. Its function is as follows. Probable rhomboid-type serine protease that catalyzes intramembrane proteolysis. The protein is Rhomboid-type serine protease 2 (RBD2) of Saccharomyces cerevisiae (strain ATCC 204508 / S288c) (Baker's yeast).